Reading from the N-terminus, the 369-residue chain is Chaperone protein DnaJ (369 aa).

Residues 4 to 69 enclose the J domain; the sequence is SYYEILEVEK…KKRALYDRYG (66 aa). The CR-type zinc finger occupies 130-207; it reads GCKKTIKAQY…CKGKTYILKD (78 aa). 8 residues coordinate Zn(2+): Cys-143, Cys-146, Cys-159, Cys-162, Cys-181, Cys-184, Cys-195, and Cys-198. CXXCXGXG motif repeat units follow at residues 143 to 150, 159 to 166, 181 to 188, and 195 to 202; these read CESCDGTG, CKQCNGQG, CGACQGKG, and CQACKGKT.

Belongs to the DnaJ family. Homodimer. Requires Zn(2+) as cofactor.

It localises to the cytoplasm. Functionally, participates actively in the response to hyperosmotic and heat shock by preventing the aggregation of stress-denatured proteins and by disaggregating proteins, also in an autonomous, DnaK-independent fashion. Unfolded proteins bind initially to DnaJ; upon interaction with the DnaJ-bound protein, DnaK hydrolyzes its bound ATP, resulting in the formation of a stable complex. GrpE releases ADP from DnaK; ATP binding to DnaK triggers the release of the substrate protein, thus completing the reaction cycle. Several rounds of ATP-dependent interactions between DnaJ, DnaK and GrpE are required for fully efficient folding. Also involved, together with DnaK and GrpE, in the DNA replication of plasmids through activation of initiation proteins. In Helicobacter pylori (strain J99 / ATCC 700824) (Campylobacter pylori J99), this protein is Chaperone protein DnaJ.